The following is a 154-amino-acid chain: Movement protein (154 aa).

Disordered stretches follow at residues 83-103 (SSPTTFTRSQTSRLSLSHTRP) and 123-154 (WVATLTHSPSQNQQPKPSPPNRLTGRNSGRVR).

Belongs to the luteoviruses movement protein family.

In terms of biological role, transports viral genome to neighboring plant cells directly through plasmosdesmata, without any budding. The movement protein allows efficient cell to cell propagation, by bypassing the host cell wall barrier. The polypeptide is Movement protein (Barley yellow dwarf virus (isolate MAV) (BYDV)).